We begin with the raw amino-acid sequence, 154 residues long: Ribosome maturation factor RimP (154 aa).

It belongs to the RimP family.

The protein resides in the cytoplasm. Functionally, required for maturation of 30S ribosomal subunits. The polypeptide is Ribosome maturation factor RimP (Deinococcus deserti (strain DSM 17065 / CIP 109153 / LMG 22923 / VCD115)).